The primary structure comprises 259 residues: NAP1-related protein 1 (259 aa).

Positions 1–15 (MAAAEQKGKKPRTDG) are enriched in basic and acidic residues. The interval 1–20 (MAAAEQKGKKPRTDGAEAEP) is disordered. Residues 21–62 (VDAALLQSIEKLQEIQDEIEKVNEEACDKVLELEQKYNEVRR) adopt a coiled-coil conformation. The disordered stretch occupies residues 228 to 259 (ELLDDDDEVSDDDDEEEDDEDQGEGEEDGEEN).

This sequence belongs to the nucleosome assembly protein (NAP) family.

It localises to the nucleus. It is found in the cytoplasm. Functionally, acts as a histone H2A/H2B chaperone in nucleosome assembly. The protein is NAP1-related protein 1 of Oryza sativa subsp. indica (Rice).